The sequence spans 345 residues: Aurora kinase B (345 aa).

The segment at 1-25 is disordered; the sequence is MAQKENAYPWPYGSKTSQSGLNTLS. A compositionally biased stretch (polar residues) spans 14–25; it reads SKTSQSGLNTLS. T35 is subject to Phosphothreonine. The interval 50 to 77 is disordered; the sequence is TAAPGQKLAENKSQGSTASQGSQNKQPF. A compositionally biased stretch (polar residues) spans 60–77; that stretch reads NKSQGSTASQGSQNKQPF. Position 62 is a phosphoserine (S62). Positions 82-332 constitute a Protein kinase domain; sequence FEIGRPLGKG…LAEVAAHPWV (251 aa). Residues 88–96 and K111 each bind ATP; that span reads LGKGKFGNV. D205 serves as the catalytic Proton acceptor. Position 220 is an N6-acetyllysine (K220). S232 is subject to Phosphoserine. A Phosphothreonine; by autocatalysis modification is found at T237.

The protein belongs to the protein kinase superfamily. Ser/Thr protein kinase family. Aurora subfamily. In terms of assembly, component of the chromosomal passenger complex (CPC) composed of at least BIRC5/survivin, CDCA8/borealin, INCENP, AURKB or AURKC; predominantly independent AURKB- and AURKC-containing complexes exist. Associates with RACGAP1 during M phase. Interacts with SPDYC; this interaction may be required for proper localization of active, Thr-237-phosphorylated AURKB form during prometaphase and metaphase. Interacts with p53/TP53. Interacts (via the middle kinase domain) with NOC2L (via the N- and C-terminus domains). Interacts with CDCA1. Interacts with EVI5. Interacts with JTB. Interacts with NDC80. Interacts with PSMA3. Interacts with RNF2/RING1B. Interacts with SEPTIN1. Interacts with SIRT2. Interacts with TACC1. Interacts with TTC28. Post-translationally, the phosphorylation of Thr-237 requires the binding to INCENP and occurs by means of an autophosphorylation mechanism. Thr-237 phosphorylation is indispensable for the AURKB kinase activity. In terms of processing, acetylated at Lys-220 by KAT5 at kinetochores, increasing AURKB activity and promoting accurate chromosome segregation in mitosis. Ubiquitinated by different BCR (BTB-CUL3-RBX1) E3 ubiquitin ligase complexes. Ubiquitinated by the BCR(KLHL9-KLHL13) E3 ubiquitin ligase complex, ubiquitination leads to removal from mitotic chromosomes and is required for cytokinesis. During anaphase, the BCR(KLHL21) E3 ubiquitin ligase complex recruits the CPC complex from chromosomes to the spindle midzone and mediates the ubiquitination of AURKB. Ubiquitination of AURKB by BCR(KLHL21) E3 ubiquitin ligase complex may not lead to its degradation by the proteasome. Deubiquitinated by USP35; inhibiting CDH1-mediated degradation of AURKB. As to expression, expressed in testis, intestine and spleen. All of them are tissues that contain a large number of proliferating cells. Expressed during S phase, in a cell-cycle-dependent fashion.

It is found in the nucleus. The protein localises to the chromosome. It localises to the centromere. Its subcellular location is the kinetochore. The protein resides in the cytoplasm. It is found in the cytoskeleton. The protein localises to the spindle. It localises to the midbody. The enzyme catalyses L-seryl-[protein] + ATP = O-phospho-L-seryl-[protein] + ADP + H(+). It catalyses the reaction L-threonyl-[protein] + ATP = O-phospho-L-threonyl-[protein] + ADP + H(+). Its activity is regulated as follows. Activity is greatly increased when AURKB is within the CPC complex. In particular, AURKB-phosphorylated INCENP acts as an activator of AURKB. Positive feedback between HASPIN and AURKB contributes to CPC localization. Its function is as follows. Serine/threonine-protein kinase component of the chromosomal passenger complex (CPC), a complex that acts as a key regulator of mitosis. The CPC complex has essential functions at the centromere in ensuring correct chromosome alignment and segregation and is required for chromatin-induced microtubule stabilization and spindle assembly. Involved in the bipolar attachment of spindle microtubules to kinetochores and is a key regulator for the onset of cytokinesis during mitosis. Required for central/midzone spindle assembly and cleavage furrow formation. Key component of the cytokinesis checkpoint, a process required to delay abscission to prevent both premature resolution of intercellular chromosome bridges and accumulation of DNA damage: phosphorylates CHMP4C, leading to retain abscission-competent VPS4 (VPS4A and/or VPS4B) at the midbody ring until abscission checkpoint signaling is terminated at late cytokinesis. AURKB phosphorylates the CPC complex subunits BIRC5/survivin, CDCA8/borealin and INCENP. Phosphorylation of INCENP leads to increased AURKB activity. Other known AURKB substrates involved in centromeric functions and mitosis are CENPA, DES/desmin, GPAF, KIF2C, NSUN2, RACGAP1, SEPTIN1, VIM/vimentin, HASPIN, and histone H3. A positive feedback loop involving HASPIN and AURKB contributes to localization of CPC to centromeres. Phosphorylation of VIM controls vimentin filament segregation in cytokinetic process, whereas histone H3 is phosphorylated at 'Ser-10' and 'Ser-28' during mitosis (H3S10ph and H3S28ph, respectively). AURKB is also required for kinetochore localization of BUB1 and SGO1. Phosphorylation of p53/TP53 negatively regulates its transcriptional activity. Key regulator of active promoters in resting B- and T-lymphocytes: acts by mediating phosphorylation of H3S28ph at active promoters in resting B-cells, inhibiting RNF2/RING1B-mediated ubiquitination of histone H2A and enhancing binding and activity of the USP16 deubiquitinase at transcribed genes. Acts as an inhibitor of CGAS during mitosis: catalyzes phosphorylation of the N-terminus of CGAS during the G2-M transition, blocking CGAS liquid phase separation and activation, and thereby preventing CGAS-induced autoimmunity. Phosphorylates KRT5 during anaphase and telophase. Phosphorylates ATXN10 which promotes phosphorylation of ATXN10 by PLK1 and may play a role in the regulation of cytokinesis and stimulating the proteasomal degradation of ATXN10. This Mus musculus (Mouse) protein is Aurora kinase B (Aurkb).